The following is a 692-amino-acid chain: Eomesodermin (692 aa).

A disordered region spans residues 35–135 (NSSTPNLPHT…LNTAVPTSAP (101 aa)). Positions 263 to 443 (LWLKFHRHQT…HNPFAKGFRD (181 aa)) form a DNA-binding region, T-box. The tract at residues 578–692 (SMAGWGSRGS…LGYYSFYSSS (115 aa)) is required for transcription activation. Disordered regions lie at residues 595-614 (TSLP…DLLP) and 621-673 (EMSS…DIGT). Low complexity-rich tracts occupy residues 596–609 (SLPW…SGFS) and 654–665 (SPSTSSNENSPP).

Its subcellular location is the nucleus. Functionally, functions as a transcriptional activator playing a crucial role during development. Functions in gastrulation, regulating mesoderm differentiation. Activates wnt8, t/bra, chrd and mix-A/mix.1 expression. The polypeptide is Eomesodermin (eomes) (Xenopus laevis (African clawed frog)).